The following is a 39-amino-acid chain: Photosystem II reaction center protein X (39 aa).

The helical transmembrane segment at 10–30 (SSLVWAAVIVVIPAAVALVLI) threads the bilayer.

This sequence belongs to the PsbX family. Type 1 subfamily. As to quaternary structure, PSII is composed of 1 copy each of membrane proteins PsbA, PsbB, PsbC, PsbD, PsbE, PsbF, PsbH, PsbI, PsbJ, PsbK, PsbL, PsbM, PsbT, PsbX, PsbY, Psb30/Ycf12, peripheral proteins PsbO, CyanoQ (PsbQ), PsbU, PsbV and a large number of cofactors. It forms dimeric complexes.

Its subcellular location is the cellular thylakoid membrane. Functionally, involved in the binding and/or turnover of quinones at the Q(B) site of photosystem II (PSII). PSII is a light-driven water plastoquinone oxidoreductase, using light energy to abstract electrons from H(2)O, generating a proton gradient subsequently used for ATP formation. The sequence is that of Photosystem II reaction center protein X from Prochlorococcus marinus (strain MIT 9303).